The sequence spans 1266 residues: SUMO-interacting motif-containing protein 1 (1266 aa).

The disordered stretch occupies residues 1–35 (MEDFIVISDDSGSESSAGTRSGRARRLRRALSRTP). Basic residues predominate over residues 22–31 (GRARRLRRAL). An SUMO interaction motif 1 (SIM); mediates the binding to polysumoylated substrates motif is present at residues 45–49 (FIDLT). The short motif at 64–68 (VIDLT) is the SUMO interaction motif 2 (SIM); mediates the binding to polysumoylated substrates element. Composition is skewed to low complexity over residues 183 to 197 (SPFSSTSNNSSSSSN) and 532 to 553 (SSGGVTQSSGGVIQSSSGVPQS). Disordered stretches follow at residues 183–206 (SPFSSTSNNSSSSSNQRTSLPCPQ), 532–732 (SSGG…SGDV), 756–812 (NRHS…PGSA), and 1024–1052 (LTPPQDETQTSPGPGVLKTSSDHLSPQPN). Positions 560–571 (SPGSVSQSSGDV) are enriched in polar residues. Low complexity predominate over residues 764–777 (SAPSSPSCSANPLS). The interval 779 to 1266 (QSEFSSEKRP…NPDTEPASER (488 aa)) is interaction with SLF2. Residues 857 to 1266 (SKGQKLEPIP…NPDTEPASER (410 aa)) form a required for inhibition of CAPN3 protease activity region. Residues 865–1200 (IPHRRLRMVT…IDRKDLIIKR (336 aa)) are NSE5-like domain.

As to quaternary structure, forms a heterodimer with SLF2. Interacts (via SIM domains) with SUMO1 and SUMO2. Interacts with CAPN3 and CTBP1. Interacts with SMC6 and ZNF451.

Its subcellular location is the nucleus. The protein localises to the PML body. Its function is as follows. Inhibits the protease activity of CAPN3. May play a role in SMC5-SMC6 complex recruitment for viral restriction. Forms a complex with SLF2 and this complex is required to recruit SMC5-SMC6 complex to PML nuclear bodies and sites of viral replication. The polypeptide is SUMO-interacting motif-containing protein 1 (Simc1) (Rattus norvegicus (Rat)).